A 161-amino-acid chain; its full sequence is Nucleotide-binding protein Bpro_1596 (161 aa).

This sequence belongs to the YajQ family.

Functionally, nucleotide-binding protein. The sequence is that of Nucleotide-binding protein Bpro_1596 from Polaromonas sp. (strain JS666 / ATCC BAA-500).